Reading from the N-terminus, the 330-residue chain is Aspartate--ammonia ligase (330 aa).

Belongs to the class-II aminoacyl-tRNA synthetase family. AsnA subfamily.

The protein localises to the cytoplasm. It carries out the reaction L-aspartate + NH4(+) + ATP = L-asparagine + AMP + diphosphate + H(+). The protein operates within amino-acid biosynthesis; L-asparagine biosynthesis; L-asparagine from L-aspartate (ammonia route): step 1/1. This Shigella sonnei (strain Ss046) protein is Aspartate--ammonia ligase.